We begin with the raw amino-acid sequence, 1339 residues long: MERVWPECTTRCRSLQHALDVISVVTRASEQHIKVFLSSYCCNAVTLKDDFGRNATHIAASCGKKNVLDWLITGKGVDLAVKDKESGWTALHRSIFYGHIDCALSLLKHGSNLYIQDKDGYTPLDLVMKDRPPHIVFKTSDPTELYTWGDNVNFTLGHGTQQSKHHPELVEMFPRSGVYIKQMVLCKFHSVFLSQKGQVYTCGHGQGGRLGHGDELTCLVPRLVEGLRGHPCTQVAGAKDHTVVLTEDGYVYTFGLNTFHQLGIQPPPPNSNVPRQIQAKTMKGKTVLGVAAGRFHTVLWTKDAVYTVGLNGGQLGYLQDPNGEKFVSCPRQVSALHHKDINITLVSASDGATVCVSERGDIYLLSEYQCKKLASKQLNLKKVLVSGGILEHKAAPEHLKENGGQPASVFALDQAGRVFCWKSPGSSLKQCWWVYGRQLFMSDVALNKNEIMFVTQDGEGFTGKWMLEKKKKENTISNIMCHSDSQNVYEKISMQKLPFVHRAVSVATDPSGCNFAVLQSDPKTSLFEVPSVSSSVFAEDFEKLLNEANETDSIHDVTFQVGTKIFPAHKYILALRCDFFSKLFSSGEINSLDFPEVHQKGEDAAGCDLFVIEKIPPELFSHVLQFIYSDTCDMLLQGHKPKLWHKEENENTIICNFQKMGFREDIEGKSAYEVYKNSRICAENEKQKGKTKQSKKTRSIGDETSPVKMLQNTAKKFGLSNLSSRLDGVRYENGRINVFHKKSENKLRFNQKKCSSHYDVMMKSEDGKEFHCHKCVLCARLEYFNSMLSSSWIEASCCSQLEMPIHSDVLQVILDYIYTDEVLTVKESANVEFVCNVLVIADQLLIVRLKEICEVTIAERITLKNAAELLEFAALYNADQLKLSCLQFVGLNMGALLEARSLDVLSDDVLKDLSEAYRKMIPSMNKRIITPYLDGPDISILQSEDIESLISVQDDIYSYQITQEATLKKSKAKPKKKQRKRLDSSGGYNLSDIIQSPTSTGFVKPEKTNSVESLQDLLTSDSEGSFVGASSPRDLQSPDLFPVFTHETKETICVERNRSSPPVANGAASTKMPIPTTSSPKAIPMSRITPSTSPNWVAMPCSPASPVTMDLRAIMELEENIQKCGAMPKLNAGGTKPGTHVMKLSQKQRKMMAMSSKESNNENKPAKVTVAPTTIKSPAKTWAAAFHLGENKSFRDLLLEEKQSVTSFPSLSSDVKKSKHTEELDPSELARRPSGTLNQEAKLKCDVPNQDNSNPWHLTLSKNNASSAPVTFTAIVEEEEKQEAALIRSREKPLALIQIEERAIQDLLLHYQAIDNPEEYITIERAAQIPMATPMWNKH.

ANK repeat units follow at residues 51–81 (FGRN…DLAV), 86–115 (SGWT…NLYI), and 119–154 (DGYT…NVNF). RCC1 repeat units lie at residues 142-195 (PTEL…FLSQ), 196-247 (KGQV…VLTE), and 249-302 (GYVY…LWTK). The region spanning 555–636 (HDVTFQVGTK…IYSDTCDMLL (82 aa)) is the BTB 1 domain. A disordered region spans residues 685-704 (EKQKGKTKQSKKTRSIGDET). Basic residues predominate over residues 689–698 (GKTKQSKKTR). One can recognise a BTB 2 domain in the interval 758 to 826 (YDVMMKSEDG…IYTDEVLTVK (69 aa)). A compositionally biased stretch (basic residues) spans 970-980 (SKAKPKKKQRK). 3 disordered regions span residues 970-993 (SKAK…LSDI), 1058-1089 (RSSP…SRIT), and 1208-1237 (FPSL…SGTL). Residues 1214–1231 (DVKKSKHTEELDPSELAR) show a composition bias toward basic and acidic residues.

Its subcellular location is the cytoplasm. It localises to the membrane. Its function is as follows. Acts as an inhibitor of BTK tyrosine kinase activity, thereby playing a role in B-cell development. The sequence is that of Inhibitor of Bruton tyrosine kinase (ibtk) from Xenopus laevis (African clawed frog).